The primary structure comprises 354 residues: Clavesin-1 (354 aa).

Positions 118–279 (IKRALIDGFP…EFGGTLPPYD (162 aa)) constitute a CRAL-TRIO domain. A disordered region spans residues 317–354 (RECSPKPMKRSQSVVEAGTLKHEEKGENENTQPLLALD). Basic and acidic residues predominate over residues 335–344 (TLKHEEKGEN). Residues 345–354 (ENTQPLLALD) are compositionally biased toward polar residues.

As to quaternary structure, forms a complex with clathrin heavy chain and gamma-adaptin. As to expression, expressed in brain with no expression detected in non-neuronal tissues (at protein level).

The protein localises to the golgi apparatus. It is found in the trans-Golgi network membrane. It localises to the early endosome membrane. The protein resides in the cytoplasmic vesicle. Its subcellular location is the clathrin-coated vesicle. Required for normal morphology of late endosomes and/or lysosomes in neurons. Binds phosphatidylinositol 3,5-bisphosphate (PtdIns(3,5)P2). The protein is Clavesin-1 of Rattus norvegicus (Rat).